We begin with the raw amino-acid sequence, 139 residues long: Acidic phospholipase A2 BpPLA2-TXI (139 aa).

An N-terminal signal peptide occupies residues 1-16; the sequence is MRTLWIMAVLLVGVEG. A disulfide bond links Cys44 and Cys60. 2 residues coordinate Ca(2+): Gly45 and Gly47. Residue His63 is part of the active site. Asp64 provides a ligand contact to Ca(2+). 3 disulfide bridges follow: Cys65–Cys139, Cys73–Cys97, and Cys91–Cys102.

It belongs to the phospholipase A2 family. Group II subfamily. D49 sub-subfamily. Requires Ca(2+) as cofactor. In terms of tissue distribution, expressed by the venom gland.

The protein resides in the secreted. It carries out the reaction a 1,2-diacyl-sn-glycero-3-phosphocholine + H2O = a 1-acyl-sn-glycero-3-phosphocholine + a fatty acid + H(+). PLA2 catalyzes the calcium-dependent hydrolysis of the 2-acyl groups in 3-sn-phosphoglycerides. In Bothrops pauloensis (Neuwied's lancehead), this protein is Acidic phospholipase A2 BpPLA2-TXI.